We begin with the raw amino-acid sequence, 423 residues long: Kynureninase (423 aa).

Residues Leu105, Ser106, 133–136 (FPSD), Asp218, His221, and Tyr243 each bind pyridoxal 5'-phosphate. Position 244 is an N6-(pyridoxal phosphate)lysine (Lys244). Trp273 and Asn301 together coordinate pyridoxal 5'-phosphate.

Belongs to the kynureninase family. As to quaternary structure, homodimer. It depends on pyridoxal 5'-phosphate as a cofactor.

The enzyme catalyses L-kynurenine + H2O = anthranilate + L-alanine + H(+). The catalysed reaction is 3-hydroxy-L-kynurenine + H2O = 3-hydroxyanthranilate + L-alanine + H(+). It participates in amino-acid degradation; L-kynurenine degradation; L-alanine and anthranilate from L-kynurenine: step 1/1. It functions in the pathway cofactor biosynthesis; NAD(+) biosynthesis; quinolinate from L-kynurenine: step 2/3. In terms of biological role, catalyzes the cleavage of L-kynurenine (L-Kyn) and L-3-hydroxykynurenine (L-3OHKyn) into anthranilic acid (AA) and 3-hydroxyanthranilic acid (3-OHAA), respectively. This chain is Kynureninase, found in Xanthomonas oryzae pv. oryzae (strain KACC10331 / KXO85).